We begin with the raw amino-acid sequence, 230 residues long: Ion-translocating oxidoreductase complex subunit E (230 aa).

The next 6 membrane-spanning stretches (helical) occupy residues 18 to 38, 39 to 59, 63 to 83, 86 to 106, 125 to 145, and 182 to 202; these read ALVQLLGLCPLLAVTSTATNA, LGLGLATTLVLTLTNLTVSAL, TPAEIRIPIYVMIIASVVSAV, LINAYAFGLYQSLGIFIPLIV, WLSALDGFSIGMGATGAMFVL, and PFLLAMLPPGAFIGLGLMLAV.

This sequence belongs to the NqrDE/RnfAE family. As to quaternary structure, the complex is composed of six subunits: RsxA, RsxB, RsxC, RsxD, RsxE and RsxG.

The protein resides in the cell inner membrane. Part of a membrane-bound complex that couples electron transfer with translocation of ions across the membrane. Required to maintain the reduced state of SoxR. This Salmonella agona (strain SL483) protein is Ion-translocating oxidoreductase complex subunit E.